We begin with the raw amino-acid sequence, 658 residues long: Glycogen debranching enzyme (658 aa).

D335 (nucleophile) is an active-site residue. The Proton donor role is filled by E370. Basic and acidic residues predominate over residues 457–468 (NDANGEGNRDGT). A disordered region spans residues 457 to 478 (NDANGEGNRDGTDSNFSNNHGT).

It belongs to the glycosyl hydrolase 13 family.

It carries out the reaction Hydrolysis of (1-&gt;6)-alpha-D-glucosidic linkages to branches with degrees of polymerization of three or four glucose residues in limit dextrin.. Its pathway is glycan degradation; glycogen degradation. Removes maltotriose and maltotetraose chains that are attached by 1,6-alpha-linkage to the limit dextrin main chain, generating a debranched limit dextrin. This is Glycogen debranching enzyme from Pectobacterium carotovorum subsp. carotovorum (strain PC1).